The following is a 474-amino-acid chain: PRAME family member 7 (474 aa).

The LRR 1; degenerate repeat unit spans residues glutamine 97–serine 122. The LRR 2; degenerate repeat unit spans residues histidine 177–glutamate 201. The LRR 3; degenerate repeat unit spans residues leucine 202–glutamine 228. The LRR 4; degenerate repeat unit spans residues methionine 229–lysine 264. LRR repeat units lie at residues leucine 265–leucine 290, glutamine 291–lysine 322, glutamate 323–glycine 341, valine 347–arginine 374, and cysteine 375–histidine 399.

Belongs to the PRAME family.

The sequence is that of PRAME family member 7 from Homo sapiens (Human).